The chain runs to 304 residues: Putative S-adenosyl-L-methionine-dependent methyltransferase MAV_4236 (304 aa).

S-adenosyl-L-methionine-binding positions include Asp129 and 158 to 159 (DL).

The protein belongs to the UPF0677 family.

In terms of biological role, exhibits S-adenosyl-L-methionine-dependent methyltransferase activity. The polypeptide is Putative S-adenosyl-L-methionine-dependent methyltransferase MAV_4236 (Mycobacterium avium (strain 104)).